Reading from the N-terminus, the 385-residue chain is uncharacterized protein (385 aa).

8 helical membrane-spanning segments follow: residues 17–37 (ILII…FIFT), 72–92 (TELM…WFLL), 107–127 (WILK…KCIT), 155–175 (ICLI…FYII), 191–211 (WIQA…LVLL), 295–315 (AFPS…FYFL), 326–346 (ITLL…IVVN), and 354–374 (ITFT…FNSF).

The protein resides in the membrane. This is an uncharacterized protein from Mycoplasma capricolum subsp. capricolum (strain California kid / ATCC 27343 / NCTC 10154).